The sequence spans 430 residues: Probable acetate kinase (430 aa).

A Mg(2+)-binding site is contributed by N12. K19 is an ATP binding site. Substrate is bound at residue R100. D159 acts as the Proton donor/acceptor in catalysis. ATP is bound at residue 220 to 224 (HLGSG). E416 contacts Mg(2+).

This sequence belongs to the acetokinase family. Mg(2+) is required as a cofactor.

It catalyses the reaction acetate + ATP = acetyl phosphate + ADP. Its pathway is metabolic intermediate biosynthesis; acetyl-CoA biosynthesis; acetyl-CoA from acetate: step 1/2. In Cryptococcus neoformans var. neoformans serotype D (strain B-3501A) (Filobasidiella neoformans), this protein is Probable acetate kinase.